Consider the following 132-residue polypeptide: uncharacterized protein (132 aa).

To M.jannaschii MJ0661.

This is an uncharacterized protein from Helicobacter pylori (strain ATCC 700392 / 26695) (Campylobacter pylori).